Reading from the N-terminus, the 626-residue chain is Colicin-Ib (626 aa).

Over residues 276 to 286 (QQLTQQKNTPD) the composition is skewed to polar residues. The interval 276 to 308 (QQLTQQKNTPDGKTIVSPEKFPGRSSTNHSIVV) is disordered. Residues 588-612 (FSVMLGTPVGILGFAIIMAAVSALV) traverse the membrane as a helical segment.

It belongs to the channel forming colicin family.

Its subcellular location is the host membrane. Functionally, this colicin is a channel-forming colicin. This class of transmembrane toxins depolarize the cytoplasmic membrane, leading to dissipation of cellular energy. Colicins are polypeptide toxins produced by and active against E.coli and closely related bacteria. In Escherichia coli, this protein is Colicin-Ib (cib).